A 268-amino-acid polypeptide reads, in one-letter code: Interleukin-2 receptor subunit alpha (268 aa).

A signal peptide spans 1 to 21; sequence MEPCLLMWGILTFITVSGYTT. The Sushi 1 domain occupies 22-81; the sequence is DLCDDDPPNLKHATFKALTYKTGTVLNCDCERGFRRISSYMHCTGNSSHASWENKCRCKS. Over 22-237 the chain is Extracellular; that stretch reads DLCDDDPPNL…ESFIFTTEYQ (216 aa). 3 disulfide bridges follow: cysteine 24/cysteine 64, cysteine 49/cysteine 77, and cysteine 51/cysteine 79. The N-linked (GlcNAc...) asparagine glycan is linked to asparagine 67. Positions 83 to 112 are disordered; sequence SPENRKGKVTTKPEEQKGENPTEMQSQTPP. A compositionally biased stretch (basic and acidic residues) spans 85–102; the sequence is ENRKGKVTTKPEEQKGEN. Residues 120–183 enclose the Sushi 2 domain; sequence GHCREPPPWE…WTQPPLKCIS (64 aa). 2 disulfides stabilise this stretch: cysteine 122–cysteine 165 and cysteine 149–cysteine 181. Residues 186–213 form a disordered region; it reads QFPDDEELQASTDAPAGRDTSSPFITTS. Residues 204 to 213 are compositionally biased toward polar residues; the sequence is DTSSPFITTS. Residues 238-258 traverse the membrane as a helical segment; the sequence is IAVASCVLLLISIVLLSGLTW. Residues 259-268 lie on the Cytoplasmic side of the membrane; it reads QRRRRKSRTI.

As to quaternary structure, non-covalent dimer of an alpha and a beta subunit. IL2R exists in 3 different forms: a high affinity dimer, an intermediate affinity monomer (beta subunit), and a low affinity monomer (alpha subunit). The high and intermediate affinity forms also associate with a gamma subunit.

It is found in the membrane. In terms of biological role, receptor for interleukin-2. The receptor is involved in the regulation of immune tolerance by controlling regulatory T cells (TREGs) activity. TREGs suppress the activation and expansion of autoreactive T-cells. This Canis lupus familiaris (Dog) protein is Interleukin-2 receptor subunit alpha (IL2RA).